The following is a 191-amino-acid chain: Adenylate kinase (191 aa).

An ATP-binding site is contributed by Gly12 to Thr17. The segment at Ser33 to Val62 is NMP. AMP is bound by residues Thr34, Arg39, Asn60–Val62, Gly87–Arg90, and Gln94. Residues Gly129 to Asp135 form an LID region. Position 130 (Arg130) interacts with ATP. 2 residues coordinate AMP: Arg132 and Arg144. Arg172 provides a ligand contact to ATP.

Belongs to the adenylate kinase family. As to quaternary structure, monomer.

The protein localises to the cytoplasm. The enzyme catalyses AMP + ATP = 2 ADP. The protein operates within purine metabolism; AMP biosynthesis via salvage pathway; AMP from ADP: step 1/1. Its function is as follows. Catalyzes the reversible transfer of the terminal phosphate group between ATP and AMP. Plays an important role in cellular energy homeostasis and in adenine nucleotide metabolism. The chain is Adenylate kinase from Campylobacter fetus subsp. fetus (strain 82-40).